Reading from the N-terminus, the 943-residue chain is MSKKRLYEIAKEVGVESKVIVAKAQELGLSVKSHSSSVEEADANRITSSLKAGTAKDESKPAPKATPTPKEEKVEPKVDKASVAKSAPAKETSKAEVKEASVALKKPKSRNFKAEREARAKAEAERRKNGGGRDNRNRNQQGNDQGKRHNNDRRNQKGNGQGDHNKGNRDNSTNHDRNFQGKLRNDQNQNNRRDNARNNQAGPRIDLKARAAALKAEQNAEYSRQSETRFREEKAAEQRRAKEQEKARKEKQQAEVAVQKAAAETKPAPKPAPVAPQSAPTAQVQDTRRKKVRPNKSRDNRRVNEDGPKQTRNNKWNNQNQVRNQRNSNWNKNKNKKGKNNRGNSAPKPVTERKFHELPKEFEYTEGMTVAEIAKRIKREPAEIVKKLFMMGVMATQNQSLDGDTIELLMVDYGIEATKKEEVDNADIERFFVDEDYLNKDAMVERAPVVTIMGHVDHGKTTLLDTLRNSRVATGEAGGITQHIGAYQIEEGGKKITFLDTPGHAAFTSMRARGASVTDITVLIVAADDGVMPQTIEAINHSKAAGVPIIVAINKIDKPDANPERVIGELAEHGVISTAWGGDSEFVEISAKFGQNIEELLETILLVAEVEELKADPTVRAIGTVIEARLDKGKGAVATLLVQQGTLNVQDPIVVGNTFGRVRAMTNDLGRRIKTAGPSAPVSITGLNEAPMAGDHFAVYEDEKAARAAGEERAKRALMKQRQQTHRVSLDNLFDTLKAGEMKTVNVIIKADVQGSVEALAASLLKIDVEGVRVNVVHSAVGAINESDITLAEASDAVVIGFNVRPTPQARQQAETDEVEIRLHSIIYKVIEEIEDAMKGMLDPEFEEKIIGEAVIRETFKVSKVGTIGGFMVTNGKITRDSSARVIRDGVVIFDGKLASLKHYKDDVKEVGNAQEGGLTIENYNDIKVDDVIEAYIMEEIKR.

Residues 29-357 (LSVKSHSSSV…KPVTERKFHE (329 aa)) are disordered. Composition is skewed to basic and acidic residues over residues 69–82 (PKEEKVEPKVDKAS), 112–137 (FKAEREARAKAEAERRKNGGGRDNRN), 145–155 (QGKRHNNDRRN), 163–196 (DHNKGNRDNSTNHDRNFQGKLRNDQNQNNRRDNA), and 224–253 (RQSETRFREEKAAEQRRAKEQEKARKEKQQ). Residues 254–266 (AEVAVQKAAAETK) show a composition bias toward low complexity. Basic and acidic residues predominate over residues 296–309 (KSRDNRRVNEDGPK). A compositionally biased stretch (low complexity) spans 313–332 (NNKWNNQNQVRNQRNSNWNK). A tr-type G domain is found at 445–614 (ERAPVVTIMG…LLVAEVEELK (170 aa)). Residues 454–461 (GHVDHGKT) form a G1 region. 454–461 (GHVDHGKT) contacts GTP. A G2 region spans residues 479 to 483 (GITQH). The tract at residues 500 to 503 (DTPG) is G3. GTP is bound by residues 500–504 (DTPGH) and 554–557 (NKID). Positions 554-557 (NKID) are G4. The tract at residues 590 to 592 (SAK) is G5.

It belongs to the TRAFAC class translation factor GTPase superfamily. Classic translation factor GTPase family. IF-2 subfamily.

The protein resides in the cytoplasm. One of the essential components for the initiation of protein synthesis. Protects formylmethionyl-tRNA from spontaneous hydrolysis and promotes its binding to the 30S ribosomal subunits. Also involved in the hydrolysis of GTP during the formation of the 70S ribosomal complex. The protein is Translation initiation factor IF-2 of Streptococcus thermophilus (strain CNRZ 1066).